Here is a 132-residue protein sequence, read N- to C-terminus: Small ribosomal subunit protein uS8 (132 aa).

Belongs to the universal ribosomal protein uS8 family. In terms of assembly, part of the 30S ribosomal subunit. Contacts proteins S5 and S12.

Its function is as follows. One of the primary rRNA binding proteins, it binds directly to 16S rRNA central domain where it helps coordinate assembly of the platform of the 30S subunit. The protein is Small ribosomal subunit protein uS8 of Syntrophomonas wolfei subsp. wolfei (strain DSM 2245B / Goettingen).